The following is a 233-amino-acid chain: Large ribosomal subunit protein uL1 (233 aa).

Belongs to the universal ribosomal protein uL1 family. Part of the 50S ribosomal subunit.

In terms of biological role, binds directly to 23S rRNA. The L1 stalk is quite mobile in the ribosome, and is involved in E site tRNA release. Functionally, protein L1 is also a translational repressor protein, it controls the translation of the L11 operon by binding to its mRNA. This chain is Large ribosomal subunit protein uL1, found in Thermotoga petrophila (strain ATCC BAA-488 / DSM 13995 / JCM 10881 / RKU-1).